Reading from the N-terminus, the 204-residue chain is ATP phosphoribosyltransferase (204 aa).

It belongs to the ATP phosphoribosyltransferase family. Short subfamily. Heteromultimer composed of HisG and HisZ subunits.

It localises to the cytoplasm. The catalysed reaction is 1-(5-phospho-beta-D-ribosyl)-ATP + diphosphate = 5-phospho-alpha-D-ribose 1-diphosphate + ATP. It participates in amino-acid biosynthesis; L-histidine biosynthesis; L-histidine from 5-phospho-alpha-D-ribose 1-diphosphate: step 1/9. Functionally, catalyzes the condensation of ATP and 5-phosphoribose 1-diphosphate to form N'-(5'-phosphoribosyl)-ATP (PR-ATP). Has a crucial role in the pathway because the rate of histidine biosynthesis seems to be controlled primarily by regulation of HisG enzymatic activity. The protein is ATP phosphoribosyltransferase of Staphylococcus aureus (strain bovine RF122 / ET3-1).